The sequence spans 296 residues: Phosphatidylserine decarboxylase proenzyme (296 aa).

Residues aspartate 100, histidine 157, and serine 263 each act as charge relay system; for autoendoproteolytic cleavage activity in the active site. Serine 263 serves as the catalytic Schiff-base intermediate with substrate; via pyruvic acid; for decarboxylase activity. Residue serine 263 is modified to Pyruvic acid (Ser); by autocatalysis.

This sequence belongs to the phosphatidylserine decarboxylase family. PSD-B subfamily. Prokaryotic type I sub-subfamily. As to quaternary structure, heterodimer of a large membrane-associated beta subunit and a small pyruvoyl-containing alpha subunit. Requires pyruvate as cofactor. Is synthesized initially as an inactive proenzyme. Formation of the active enzyme involves a self-maturation process in which the active site pyruvoyl group is generated from an internal serine residue via an autocatalytic post-translational modification. Two non-identical subunits are generated from the proenzyme in this reaction, and the pyruvate is formed at the N-terminus of the alpha chain, which is derived from the carboxyl end of the proenzyme. The autoendoproteolytic cleavage occurs by a canonical serine protease mechanism, in which the side chain hydroxyl group of the serine supplies its oxygen atom to form the C-terminus of the beta chain, while the remainder of the serine residue undergoes an oxidative deamination to produce ammonia and the pyruvoyl prosthetic group on the alpha chain. During this reaction, the Ser that is part of the protease active site of the proenzyme becomes the pyruvoyl prosthetic group, which constitutes an essential element of the active site of the mature decarboxylase.

It localises to the cell membrane. It catalyses the reaction a 1,2-diacyl-sn-glycero-3-phospho-L-serine + H(+) = a 1,2-diacyl-sn-glycero-3-phosphoethanolamine + CO2. The protein operates within phospholipid metabolism; phosphatidylethanolamine biosynthesis; phosphatidylethanolamine from CDP-diacylglycerol: step 2/2. Catalyzes the formation of phosphatidylethanolamine (PtdEtn) from phosphatidylserine (PtdSer). The polypeptide is Phosphatidylserine decarboxylase proenzyme (Actinobacillus pleuropneumoniae serotype 7 (strain AP76)).